The chain runs to 177 residues: Ribulose bisphosphate carboxylase small subunit, chloroplastic 3 (177 aa).

The N-terminal 56 residues, 1–56 (MASSMMASTAAAVARAGPAQSSMVPFNACRSSVPFPATRKANNNLSTLPGNGGRVS), are a transit peptide targeting the chloroplast.

The protein belongs to the RuBisCO small chain family. As to quaternary structure, heterohexadecamer of 8 large and 8 small subunits.

It localises to the plastid. The protein resides in the chloroplast. Functionally, ruBisCO catalyzes two reactions: the carboxylation of D-ribulose 1,5-bisphosphate, the primary event in carbon dioxide fixation, as well as the oxidative fragmentation of the pentose substrate. Both reactions occur simultaneously and in competition at the same active site. Although the small subunit is not catalytic it is essential for maximal activity. This chain is Ribulose bisphosphate carboxylase small subunit, chloroplastic 3, found in Lemna gibba (Swollen duckweed).